The sequence spans 185 residues: Elongation factor P (185 aa).

The protein belongs to the elongation factor P family.

It localises to the cytoplasm. It functions in the pathway protein biosynthesis; polypeptide chain elongation. Functionally, involved in peptide bond synthesis. Stimulates efficient translation and peptide-bond synthesis on native or reconstituted 70S ribosomes in vitro. Probably functions indirectly by altering the affinity of the ribosome for aminoacyl-tRNA, thus increasing their reactivity as acceptors for peptidyl transferase. The chain is Elongation factor P from Geobacillus thermodenitrificans (strain NG80-2).